The primary structure comprises 232 residues: 5'-methylthioadenosine/S-adenosylhomocysteine nucleosidase (232 aa).

Glutamate 12 serves as the catalytic Proton acceptor. Substrate contacts are provided by residues glycine 78, isoleucine 152, and 173 to 174 (ME). Aspartate 197 serves as the catalytic Proton donor.

It belongs to the PNP/UDP phosphorylase family. MtnN subfamily. In terms of assembly, homodimer.

It catalyses the reaction S-adenosyl-L-homocysteine + H2O = S-(5-deoxy-D-ribos-5-yl)-L-homocysteine + adenine. The enzyme catalyses S-methyl-5'-thioadenosine + H2O = 5-(methylsulfanyl)-D-ribose + adenine. It carries out the reaction 5'-deoxyadenosine + H2O = 5-deoxy-D-ribose + adenine. It functions in the pathway amino-acid biosynthesis; L-methionine biosynthesis via salvage pathway; S-methyl-5-thio-alpha-D-ribose 1-phosphate from S-methyl-5'-thioadenosine (hydrolase route): step 1/2. Functionally, catalyzes the irreversible cleavage of the glycosidic bond in both 5'-methylthioadenosine (MTA) and S-adenosylhomocysteine (SAH/AdoHcy) to adenine and the corresponding thioribose, 5'-methylthioribose and S-ribosylhomocysteine, respectively. Also cleaves 5'-deoxyadenosine, a toxic by-product of radical S-adenosylmethionine (SAM) enzymes, into 5-deoxyribose and adenine. Thus, is required for in vivo function of the radical SAM enzymes biotin synthase and lipoic acid synthase, that are inhibited by 5'-deoxyadenosine accumulation. This chain is 5'-methylthioadenosine/S-adenosylhomocysteine nucleosidase, found in Citrobacter koseri (strain ATCC BAA-895 / CDC 4225-83 / SGSC4696).